A 97-amino-acid polypeptide reads, in one-letter code: Nucleoid-associated protein HP_0035 (97 aa).

The protein belongs to the YbaB/EbfC family. In terms of assembly, homodimer.

The protein localises to the cytoplasm. The protein resides in the nucleoid. Binds to DNA and alters its conformation. May be involved in regulation of gene expression, nucleoid organization and DNA protection. This Helicobacter pylori (strain ATCC 700392 / 26695) (Campylobacter pylori) protein is Nucleoid-associated protein HP_0035.